Here is a 217-residue protein sequence, read N- to C-terminus: Protein-methionine-sulfoxide reductase heme-binding subunit MsrQ (217 aa).

Helical transmembrane passes span 82 to 102 (MLGLYTFFYGTLHFLIWLLVD), 118 to 138 (PFITVGFAAFVLMIPLAATST), 150 to 170 (WQWLHRLVYVTGVLGILHYWW), and 180 to 200 (EVSIYAAVMAVLLGLRVWWVW).

This sequence belongs to the MsrQ family. Heterodimer of a catalytic subunit (MsrP) and a heme-binding subunit (MsrQ). It depends on FMN as a cofactor. Requires heme b as cofactor.

Its subcellular location is the cell inner membrane. In terms of biological role, part of the MsrPQ system that repairs oxidized periplasmic proteins containing methionine sulfoxide residues (Met-O), using respiratory chain electrons. Thus protects these proteins from oxidative-stress damage caused by reactive species of oxygen and chlorine generated by the host defense mechanisms. MsrPQ is essential for the maintenance of envelope integrity under bleach stress, rescuing a wide series of structurally unrelated periplasmic proteins from methionine oxidation. MsrQ provides electrons for reduction to the reductase catalytic subunit MsrP, using the quinone pool of the respiratory chain. In Ralstonia nicotianae (strain ATCC BAA-1114 / GMI1000) (Ralstonia solanacearum), this protein is Protein-methionine-sulfoxide reductase heme-binding subunit MsrQ.